The primary structure comprises 662 residues: Protein associated with UVRAG as autophagy enhancer (662 aa).

Disordered regions lie at residues 1–34 (MVSQSTVRQDSPVEPWEGISDHSGIIDGSPRLLN) and 58–131 (DVQQ…SLSS). Residues 58–71 (DVQQQPQDLQSQVP) show a composition bias toward low complexity. The segment covering 100-113 (AETTLSEDTTDSVG) has biased composition (polar residues). Low complexity predominate over residues 114–131 (SASPHGSSEKSSSFSLSS). At S157 the chain carries Phosphoserine; by MTOR. The segment at 196–235 (EVFVLPVDVEKENAHFYVADMIISAMEKMKCNILSQQQTE) is interaction with UVRAG. N6-acetyllysine occurs at positions 483, 523, 533, 573, and 633.

In terms of assembly, interacts with UVRAG; the interaction is direct and promotes association with the PI3K/PI3KC3 and HOPS complexes. Interacts with STX17. In terms of processing, phosphorylated by MTOR at Ser-157 under nutrient-rich conditions. Phosphorylation prevents acetylation by KAT5/TIP60 and impairs RUBCNL/PACER function and autophagosome maturation. Under autophagy induction, Phosphorylation by MTOR is repressed, enabling acetylation by KAT5/TIP60. Post-translationally, acetylated by KAT5/TIP60 under autophagy induction, promoting autophagosome maturation and lipid metabolism. Acetylation is prevented by phosphorylation by MTOR. Lys-483 and Lys-573 constitute the key sites for tuning function in autophagy. As to expression, expressed weakly in cervical carcinoma cell lines.

Its subcellular location is the cytoplasmic vesicle. It localises to the autophagosome membrane. In terms of biological role, regulator of autophagy that promotes autophagosome maturation by facilitating the biogenesis of phosphatidylinositol 3-phosphate (PtdIns(3)P) in late steps of autophagy. Acts by antagonizing RUBCN, thereby stimulating phosphatidylinositol 3-kinase activity of the PI3K/PI3KC3 complex. Following anchorage to the autophagosomal SNARE STX17, promotes the recruitment of PI3K/PI3KC3 and HOPS complexes to the autophagosome to regulate the fusion specificity of autophagosomes with late endosomes/lysosomes. Binds phosphoinositides phosphatidylinositol 3-phosphate (PtdIns(3)P), 4-phosphate (PtdIns(4)P) and 5-phosphate (PtdIns(5)P). In addition to its role in autophagy, acts as a regulator of lipid and glycogen homeostasis. May act as a tumor suppressor. This is Protein associated with UVRAG as autophagy enhancer from Homo sapiens (Human).